A 34-amino-acid polypeptide reads, in one-letter code: Photosystem II reaction center protein Psb30 (34 aa).

Residues 6 to 26 (VIGQLTSLAMIVLVGPAVIVV) traverse the membrane as a helical segment.

This sequence belongs to the Psb30/Ycf12 family. As to quaternary structure, PSII is composed of 1 copy each of membrane proteins PsbA, PsbB, PsbC, PsbD, PsbE, PsbF, PsbH, PsbI, PsbJ, PsbK, PsbL, PsbM, PsbT, PsbX, PsbY, PsbZ, Psb30/Ycf12, peripheral proteins of the oxygen-evolving complex and a large number of cofactors. It forms dimeric complexes.

Its subcellular location is the plastid. It localises to the chloroplast thylakoid membrane. Functionally, a core subunit of photosystem II (PSII), probably helps stabilize the reaction center. The polypeptide is Photosystem II reaction center protein Psb30 (Gracilaria tenuistipitata var. liui (Red alga)).